Here is an 86-residue protein sequence, read N- to C-terminus: Kappa-theraphotoxin-Cg1a 2 (86 aa).

A signal peptide spans 1 to 21; it reads MKVSVVITLAVLGVMFVWASA. Residues 22–50 constitute a propeptide that is removed on maturation; that stretch reads AELEERGSDQRDSPAWLKSMERIFQSEER. Disulfide bonds link cysteine 52–cysteine 66, cysteine 59–cysteine 71, and cysteine 65–cysteine 78. Position 84 is a phenylalanine amide (phenylalanine 84).

Belongs to the neurotoxin 10 (Hwtx-1) family. 28 (Jztx-11) subfamily. As to expression, expressed by the venom gland.

It localises to the secreted. Functionally, this toxin acts as a voltage-dependent gating-modifier. It inhibits the sodium conductance (IC(50)=124 nM) and slows the fast inactivation (EC(50)=1180 nM) of Nav1.5/SCN5A. It significantly shifts the activation to more depolarized voltages and decreases the deactivation of Nav1.5 currents upon extreme depolarization, but only slightly affects voltage-dependence of steady-state inactivation. In addition, this toxin causes an approximately five-fold decrease in the rate of recovery from inactivation and an approximately 1.9-fold reduction in the closed-state inactivation rate. This toxin integrates the functions of site 3 toxins (alpha-scorpion toxins) with site 4 toxins (beta-scorpion and spider toxins) by targeting multiple sites on Nav1.5. Also shows inhibition of voltage-gated potassium channels (5 uM completely inhibits Kv2.1/KCNB1, whereas 5 uM moderately inhibits Kv4.2/KCND2 Kv4.1/KCND1 channels). The polypeptide is Kappa-theraphotoxin-Cg1a 2 (Chilobrachys guangxiensis (Chinese earth tiger tarantula)).